The primary structure comprises 771 residues: Probable glycosyltransferase STELLO1 (771 aa).

The disordered stretch occupies residues 1–23; that stretch reads MLVQDRAAPSPAKPPKSQIRELP. Topologically, residues 1–50 are cytoplasmic; that stretch reads MLVQDRAAPSPAKPPKSQIRELPTHQQIRRRFSEPKNLDFSTWFSENLSR. Residues 51–71 traverse the membrane as a helical segment; it reads IAVFSLLIVTIVAFFFLYNTT. The Lumenal portion of the chain corresponds to 72–771; sequence DTASLLCFQS…EGDPLLMELV (700 aa). 2 N-linked (GlcNAc...) asparagine glycosylation sites follow: asparagine 242 and asparagine 729.

This sequence belongs to the STELLO family. In terms of assembly, homo- and heterodimer with STL2. Interacts with CESA1, CESA3, CESA4, CESA6, CESA7 and CESA8, but not with GOT1. Expressed in cells that are expanding or producing secondary cell walls.

The protein localises to the golgi apparatus membrane. Probable glycosyltransferase regulating the assembly and trafficking of cellulose synthase complexes. The chain is Probable glycosyltransferase STELLO1 from Arabidopsis thaliana (Mouse-ear cress).